Consider the following 241-residue polypeptide: Large ribosomal subunit protein uL1 (241 aa).

It belongs to the universal ribosomal protein uL1 family. As to quaternary structure, part of the 50S ribosomal subunit.

Its function is as follows. Binds directly to 23S rRNA. The L1 stalk is quite mobile in the ribosome, and is involved in E site tRNA release. In terms of biological role, protein L1 is also a translational repressor protein, it controls the translation of the L11 operon by binding to its mRNA. This Streptomyces coelicolor (strain ATCC BAA-471 / A3(2) / M145) protein is Large ribosomal subunit protein uL1.